A 352-amino-acid polypeptide reads, in one-letter code: MRKIIHVDMDCFFAAVEMRDDPRLRDIPLAIGGSKERRGVISTANYPARRYGVRSAMPTAMAFKLCPQLTLLPGRMAAYKEASQHIREIFARYTPLIEPLSLDEAYLDVSDSLACGGSATLIAQEIRQSIASELNLTASAGIAPIKFLAKIASELNKPNGQYVITPNQIQPFLQDLPLSKIPGVGAVTAKRLQALGLVTCGDIQKYPLAELLKHFGKFGRVLWERSHGIDEREISPDRLRKSVGVEKTLAEDIYDWESCEALIEELYLELETRLRKVKPSLHIARQGVKLKFHDFQQTTQEHTWPVLNKVDLLEIAHAAWHERRAERGVRLVGLHVTLLDPQLERQLLLDWG.

Residues 4-185 (IIHVDMDCFF…LPLSKIPGVG (182 aa)) form the UmuC domain. Residues Asp-8 and Asp-103 each coordinate Mg(2+). Glu-104 is a catalytic residue.

It belongs to the DNA polymerase type-Y family. Monomer. It depends on Mg(2+) as a cofactor.

The protein localises to the cytoplasm. The enzyme catalyses DNA(n) + a 2'-deoxyribonucleoside 5'-triphosphate = DNA(n+1) + diphosphate. Functionally, poorly processive, error-prone DNA polymerase involved in untargeted mutagenesis. Copies undamaged DNA at stalled replication forks, which arise in vivo from mismatched or misaligned primer ends. These misaligned primers can be extended by PolIV. Exhibits no 3'-5' exonuclease (proofreading) activity. May be involved in translesional synthesis, in conjunction with the beta clamp from PolIII. In Yersinia pestis bv. Antiqua (strain Antiqua), this protein is DNA polymerase IV.